The chain runs to 92 residues: Small ribosomal subunit protein uS19 (92 aa).

The protein belongs to the universal ribosomal protein uS19 family.

Its function is as follows. Protein S19 forms a complex with S13 that binds strongly to the 16S ribosomal RNA. This is Small ribosomal subunit protein uS19 from Granulibacter bethesdensis (strain ATCC BAA-1260 / CGDNIH1).